A 196-amino-acid polypeptide reads, in one-letter code: Imidazoleglycerol-phosphate dehydratase (196 aa).

Belongs to the imidazoleglycerol-phosphate dehydratase family.

It localises to the cytoplasm. The catalysed reaction is D-erythro-1-(imidazol-4-yl)glycerol 3-phosphate = 3-(imidazol-4-yl)-2-oxopropyl phosphate + H2O. The protein operates within amino-acid biosynthesis; L-histidine biosynthesis; L-histidine from 5-phospho-alpha-D-ribose 1-diphosphate: step 6/9. The protein is Imidazoleglycerol-phosphate dehydratase of Lachnoclostridium phytofermentans (strain ATCC 700394 / DSM 18823 / ISDg) (Clostridium phytofermentans).